Here is a 366-residue protein sequence, read N- to C-terminus: Beta sliding clamp (366 aa).

This sequence belongs to the beta sliding clamp family. Forms a ring-shaped head-to-tail homodimer around DNA which binds and tethers DNA polymerases and other proteins to the DNA. The DNA replisome complex has a single clamp-loading complex (3 tau and 1 each of delta, delta', psi and chi subunits) which binds 3 Pol III cores (1 core on the leading strand and 2 on the lagging strand) each with a beta sliding clamp dimer. Additional proteins in the replisome are other copies of gamma, psi and chi, Ssb, DNA helicase and RNA primase.

The protein localises to the cytoplasm. Confers DNA tethering and processivity to DNA polymerases and other proteins. Acts as a clamp, forming a ring around DNA (a reaction catalyzed by the clamp-loading complex) which diffuses in an ATP-independent manner freely and bidirectionally along dsDNA. Initially characterized for its ability to contact the catalytic subunit of DNA polymerase III (Pol III), a complex, multichain enzyme responsible for most of the replicative synthesis in bacteria; Pol III exhibits 3'-5' exonuclease proofreading activity. The beta chain is required for initiation of replication as well as for processivity of DNA replication. The polypeptide is Beta sliding clamp (dnaN) (Buchnera aphidicola subsp. Rhopalosiphum padi).